We begin with the raw amino-acid sequence, 565 residues long: Proline--tRNA ligase (565 aa).

It belongs to the class-II aminoacyl-tRNA synthetase family. ProS type 1 subfamily. Homodimer.

Its subcellular location is the cytoplasm. It catalyses the reaction tRNA(Pro) + L-proline + ATP = L-prolyl-tRNA(Pro) + AMP + diphosphate. In terms of biological role, catalyzes the attachment of proline to tRNA(Pro) in a two-step reaction: proline is first activated by ATP to form Pro-AMP and then transferred to the acceptor end of tRNA(Pro). As ProRS can inadvertently accommodate and process non-cognate amino acids such as alanine and cysteine, to avoid such errors it has two additional distinct editing activities against alanine. One activity is designated as 'pretransfer' editing and involves the tRNA(Pro)-independent hydrolysis of activated Ala-AMP. The other activity is designated 'posttransfer' editing and involves deacylation of mischarged Ala-tRNA(Pro). The misacylated Cys-tRNA(Pro) is not edited by ProRS. The protein is Proline--tRNA ligase of Francisella tularensis subsp. tularensis (strain FSC 198).